A 77-amino-acid chain; its full sequence is U8-lycotoxin-Ls1o (77 aa).

An N-terminal signal peptide occupies residues 1–20; it reads MKLMIFTGLVLFAIVSLIEA. Residues 21–26 constitute a propeptide that is removed on maturation; that stretch reads QAENGK.

Belongs to the neurotoxin 19 (CSTX) family. 08 (U8-Lctx) subfamily. Post-translationally, contains 4 disulfide bonds. Expressed by the venom gland.

The protein resides in the secreted. In Lycosa singoriensis (Wolf spider), this protein is U8-lycotoxin-Ls1o.